Here is a 31-residue protein sequence, read N- to C-terminus: Cytochrome b6-f complex subunit 6 (31 aa).

A helical transmembrane segment spans residues 4–26; sequence LTSYFGFLLAASTITPALFIGLN.

It belongs to the PetL family. The 4 large subunits of the cytochrome b6-f complex are cytochrome b6, subunit IV (17 kDa polypeptide, PetD), cytochrome f and the Rieske protein, while the 4 small subunits are PetG, PetL, PetM and PetN. The complex functions as a dimer.

Its subcellular location is the plastid. It localises to the chloroplast thylakoid membrane. Component of the cytochrome b6-f complex, which mediates electron transfer between photosystem II (PSII) and photosystem I (PSI), cyclic electron flow around PSI, and state transitions. PetL is important for photoautotrophic growth as well as for electron transfer efficiency and stability of the cytochrome b6-f complex. This Phalaenopsis aphrodite subsp. formosana (Moth orchid) protein is Cytochrome b6-f complex subunit 6.